Consider the following 51-residue polypeptide: MRETIKLVSSAKTGHFYTATKNKRLHPEKVEVKKFDPVVRKHVMYKEVKIK.

This sequence belongs to the bacterial ribosomal protein bL33 family.

The polypeptide is Large ribosomal subunit protein bL33 (Vesicomyosocius okutanii subsp. Calyptogena okutanii (strain HA)).